Here is a 437-residue protein sequence, read N- to C-terminus: Leucine-rich repeat flightless-interacting protein 2 (437 aa).

S18 bears the Phosphoserine mark. Positions 22–49 (EALSNIAREAEARLAAKRAARAEARDIR) form a coiled coil. The span at 33-62 (ARLAAKRAARAEARDIRMRELERQQRESSS) shows a compositional bias: basic and acidic residues. Positions 33–152 (ARLAAKRAAR…DTSLSELRES (120 aa)) are disordered. A compositionally biased stretch (polar residues) spans 63-74 (KDITGTHWSRAS). Residues 77–105 (KRRDMMYDSIKDRSSRVSSLLDEKSDKQY) are compositionally biased toward basic and acidic residues. Polar residues predominate over residues 110–139 (TRPSSRNSASATTPLSGNSSRRGSGDTSSL). Phosphoserine occurs at positions 114, 117, 125, 129, and 133. The residue at position 136 (T136) is a Phosphothreonine. S137 and S138 each carry phosphoserine. Coiled-coil stretches lie at residues 143 to 239 (DTSL…LIEK) and 282 to 430 (LDVR…KANR).

The protein belongs to the LRRFIP family. Interacts with DVL3 and FLII. Weakly interacts with MYD88 in resting cells. Following LPS-stimulation, the interaction with MYD88 is rapidly enhanced; the complex gradually dissociates to basal levels after 6 hours of stimulation. Interaction with MYD88 is regulated by LPS-induced phosphorylation. In the presence of LPS, competes with FLII for MYD88-binding.

Its function is as follows. May function as activator of the canonical Wnt signaling pathway, in association with DVL3, upstream of CTNNB1/beta-catenin. Positively regulates Toll-like receptor (TLR) signaling in response to agonist probably by competing with the negative FLII regulator for MYD88-binding. The polypeptide is Leucine-rich repeat flightless-interacting protein 2 (Lrrfip2) (Rattus norvegicus (Rat)).